The following is a 140-amino-acid chain: MYNIDKILEIIPHRYPFLLVDRIIEVEEGKRAKGIKNVTINEPFFQGHFPSNPVMPGVLIVEAMAQVGAVAMLLKEEFKGKTPFFAGIDKVRFKKVVKPGDVLVIETELISLKGSIGKAKAVAMVDGEVVCEGELLFAIK.

The active site involves histidine 48.

The protein belongs to the thioester dehydratase family. FabZ subfamily.

It is found in the cytoplasm. The catalysed reaction is a (3R)-hydroxyacyl-[ACP] = a (2E)-enoyl-[ACP] + H2O. Its function is as follows. Involved in unsaturated fatty acids biosynthesis. Catalyzes the dehydration of short chain beta-hydroxyacyl-ACPs and long chain saturated and unsaturated beta-hydroxyacyl-ACPs. The polypeptide is 3-hydroxyacyl-[acyl-carrier-protein] dehydratase FabZ (Caldicellulosiruptor bescii (strain ATCC BAA-1888 / DSM 6725 / KCTC 15123 / Z-1320) (Anaerocellum thermophilum)).